Here is a 462-residue protein sequence, read N- to C-terminus: Nitrate/nitrite transporter NarU (462 aa).

The Cytoplasmic segment spans residues 1–35; that stretch reads MALQNEKNSRYLLRDWKPENPAFWENKGKHIARRN. A helical transmembrane segment spans residues 36–56; sequence LWISVSCLLLAFCVWMLFSAV. Residues 57–76 lie on the Periplasmic side of the membrane; sequence TVNLNKIGFNFTTDQLFLLT. The chain crosses the membrane as a helical span at residues 77 to 97; it reads ALPSVSGALLRVPYSFMVPIF. Residues 98-101 are Cytoplasmic-facing; sequence GGRR. The helical transmembrane segment at 102–122 threads the bilayer; the sequence is WTVFSTAILIIPCVWLGIAVQ. At 123 to 125 the chain is on the periplasmic side; the sequence is NPN. The helical transmembrane segment at 126-146 threads the bilayer; it reads TPFGIFIVIALLCGFAGANFA. Residues 147–180 are Cytoplasmic-facing; the sequence is SSMGNISFFFPKAKQGSALGINGGLGNLGVSVMQ. A helical membrane pass occupies residues 181–201; it reads LVAPLVIFVPVFAFLGVNGVP. Residues 202–206 are Periplasmic-facing; it reads QADGS. A helical membrane pass occupies residues 207–227; sequence VMSLANAAWIWVPLLAIATIA. The Cytoplasmic portion of the chain corresponds to 228-258; the sequence is AWSGMNDIASSRASIADQLPVLQRLHLWLLS. The chain crosses the membrane as a helical span at residues 259-279; that stretch reads LLYLATFGSFIGFSAGFAMLA. At 280 to 287 the chain is on the periplasmic side; sequence KTQFPDVN. The chain crosses the membrane as a helical span at residues 288 to 308; it reads ILRLAFFGPFIGAIARSVGGA. Residues 309-317 lie on the Cytoplasmic side of the membrane; sequence ISDKFGGVR. The helical transmembrane segment at 318 to 338 threads the bilayer; sequence VTLINFIFMAIFSALLFLTLP. Residues 339-344 lie on the Periplasmic side of the membrane; that stretch reads GTGSGN. A helical membrane pass occupies residues 345–365; it reads FIAFYAVFMGLFLTAGLGSGS. Topologically, residues 366–401 are cytoplasmic; sequence TFQMIAVIFRQITIYRVKMKGGSDEQAHKEAVTETA. The chain crosses the membrane as a helical span at residues 402 to 422; the sequence is AALGFISAIGAVGGFFIPQAF. The Periplasmic portion of the chain corresponds to 423-432; it reads GMSLNMTGSP. The chain crosses the membrane as a helical span at residues 433-453; the sequence is VGAMKVFLIFYIVCVLLTWLV. Topologically, residues 454–462 are cytoplasmic; the sequence is YGRRKFSQK.

The protein belongs to the major facilitator superfamily. Nitrate/nitrite porter (TC 2.A.1.8) family.

The protein resides in the cell inner membrane. Its function is as follows. Catalyzes nitrate uptake, nitrite uptake and nitrite export across the cytoplasmic membrane. May function as a nitrate/H(+) and nitrite/H(+) channel. Could confer a selective advantage during severe nutrient starvation or slow growth. This Escherichia coli (strain K12) protein is Nitrate/nitrite transporter NarU (narU).